The following is a 75-amino-acid chain: CDC42 small effector protein 1 (75 aa).

Residues C10 and C11 are each lipidated (S-palmitoyl cysteine). The 14-residue stretch at 30–43 (IGEPTNFVHLTHIG) folds into the CRIB domain. Residues 45–75 (GEMADGMQPSGPIKEQMRSKVPHANGRNSLL) are disordered.

Belongs to the CDC42SE/SPEC family.

Its subcellular location is the cytoplasm. The protein resides in the cytoskeleton. It localises to the cell membrane. In terms of biological role, probably involved in the organization of the actin cytoskeleton by acting downstream of CDC42, inducing actin filament assembly. This chain is CDC42 small effector protein 1 (cdc42se1), found in Danio rerio (Zebrafish).